Reading from the N-terminus, the 55-residue chain is Spermatid nuclear transition protein 1 (55 aa).

Basic residues predominate over residues 1–42; it reads MSTSRKLKTHGMRRGKNRAPHKGVKRGGSKRKYRKSSLKSRK. The segment at 1–55 is disordered; that stretch reads MSTSRKLKTHGMRRGKNRAPHKGVKRGGSKRKYRKSSLKSRKRGDDASRNYRSHL. 3 positions are modified to phosphoserine: serine 36, serine 37, and serine 40.

It belongs to the nuclear transition protein 1 family. In terms of tissue distribution, testis.

It localises to the nucleus. The protein resides in the chromosome. Functionally, plays a key role in the replacement of histones to protamine in the elongating spermatids of mammals. In condensing spermatids, loaded onto the nucleosomes, where it promotes the recruitment and processing of protamines, which are responsible for histone eviction. This chain is Spermatid nuclear transition protein 1 (Tnp1), found in Rattus norvegicus (Rat).